Here is a 323-residue protein sequence, read N- to C-terminus: MNPLLDVKNLYVRFKTPDGVVTAVNDLNFTLNAGSTLGIVGESGSGKSQTAFALMGLLAANGEVEGSAIFEGKELVNLPNAELNKIRAEQISMIFQDPMTSLNPYMKIGEQLMEVLQLHKGYDKQTAFAESVKMLDAVKMPEAKKRMGMYPHEFSGGMRQRVMIAMALLCRPKLLIADEPTTALDVTVQAQIMTLLNELKREFNTAIIMITHDLGVVAGICDQVMVMYAGRTMEYGTAEQIFYHPTHPYSIGLMDAIPRLDGNEEHLVTIPGNPPNLLHLPKGCPFSPRCQFATEQCQIAPKLTTFNHGQLRNCWLSAEKFNL.

The ABC transporter domain maps to 5–254 (LDVKNLYVRF…PTHPYSIGLM (250 aa)). ATP is bound at residue 41 to 48 (GESGSGKS).

The protein belongs to the ABC transporter superfamily. In terms of assembly, the complex is composed of two ATP-binding proteins (OppD and OppF), two transmembrane proteins (OppB and OppC) and a solute-binding protein (OppA or MppA).

The protein localises to the cell inner membrane. The catalysed reaction is a [peptide](out) + ATP + H2O = a [peptide](in) + ADP + phosphate + H(+). Functionally, part of the ABC transporter complex OppABCDF involved in the uptake of oligopeptides. Probably responsible for energy coupling to the transport system. The polypeptide is Oligopeptide transport ATP-binding protein OppD (oppD) (Haemophilus influenzae (strain ATCC 51907 / DSM 11121 / KW20 / Rd)).